The primary structure comprises 463 residues: Asparagine--tRNA ligase (463 aa).

This sequence belongs to the class-II aminoacyl-tRNA synthetase family. As to quaternary structure, homodimer.

It is found in the cytoplasm. The enzyme catalyses tRNA(Asn) + L-asparagine + ATP = L-asparaginyl-tRNA(Asn) + AMP + diphosphate + H(+). The protein is Asparagine--tRNA ligase of Alkaliphilus metalliredigens (strain QYMF).